Here is a 431-residue protein sequence, read N- to C-terminus: Serine--tRNA ligase (431 aa).

Thr237–Glu239 contacts L-serine. Position 268 to 270 (Arg268 to Glu270) interacts with ATP. Glu291 contributes to the L-serine binding site. Glu355 to Ser358 contributes to the ATP binding site. Ser390 is a binding site for L-serine.

This sequence belongs to the class-II aminoacyl-tRNA synthetase family. Type-1 seryl-tRNA synthetase subfamily. As to quaternary structure, homodimer. The tRNA molecule binds across the dimer.

It localises to the cytoplasm. The enzyme catalyses tRNA(Ser) + L-serine + ATP = L-seryl-tRNA(Ser) + AMP + diphosphate + H(+). It catalyses the reaction tRNA(Sec) + L-serine + ATP = L-seryl-tRNA(Sec) + AMP + diphosphate + H(+). It functions in the pathway aminoacyl-tRNA biosynthesis; selenocysteinyl-tRNA(Sec) biosynthesis; L-seryl-tRNA(Sec) from L-serine and tRNA(Sec): step 1/1. Catalyzes the attachment of serine to tRNA(Ser). Is also able to aminoacylate tRNA(Sec) with serine, to form the misacylated tRNA L-seryl-tRNA(Sec), which will be further converted into selenocysteinyl-tRNA(Sec). The chain is Serine--tRNA ligase from Neisseria meningitidis serogroup C (strain 053442).